A 553-amino-acid polypeptide reads, in one-letter code: Dihydroxy-acid dehydratase (553 aa).

Asp78 lines the Mg(2+) pocket. Cys119 serves as a coordination point for [2Fe-2S] cluster. Residues Asp120 and Lys121 each contribute to the Mg(2+) site. Lys121 is modified (N6-carboxylysine). Cys193 is a binding site for [2Fe-2S] cluster. Glu441 is a Mg(2+) binding site. Catalysis depends on Ser467, which acts as the Proton acceptor.

This sequence belongs to the IlvD/Edd family. Homodimer. The cofactor is [2Fe-2S] cluster. Requires Mg(2+) as cofactor.

The enzyme catalyses (2R)-2,3-dihydroxy-3-methylbutanoate = 3-methyl-2-oxobutanoate + H2O. The catalysed reaction is (2R,3R)-2,3-dihydroxy-3-methylpentanoate = (S)-3-methyl-2-oxopentanoate + H2O. It participates in amino-acid biosynthesis; L-isoleucine biosynthesis; L-isoleucine from 2-oxobutanoate: step 3/4. It functions in the pathway amino-acid biosynthesis; L-valine biosynthesis; L-valine from pyruvate: step 3/4. Functionally, functions in the biosynthesis of branched-chain amino acids. Catalyzes the dehydration of (2R,3R)-2,3-dihydroxy-3-methylpentanoate (2,3-dihydroxy-3-methylvalerate) into 2-oxo-3-methylpentanoate (2-oxo-3-methylvalerate) and of (2R)-2,3-dihydroxy-3-methylbutanoate (2,3-dihydroxyisovalerate) into 2-oxo-3-methylbutanoate (2-oxoisovalerate), the penultimate precursor to L-isoleucine and L-valine, respectively. This is Dihydroxy-acid dehydratase from Geobacter sulfurreducens (strain ATCC 51573 / DSM 12127 / PCA).